The sequence spans 598 residues: Elongation factor 4 (598 aa).

The region spanning 4 to 186 (INIRNFAIIA…AIVSRLPAPS (183 aa)) is the tr-type G domain. GTP-binding positions include 16-21 (DHGKST) and 133-136 (NKID).

Belongs to the TRAFAC class translation factor GTPase superfamily. Classic translation factor GTPase family. LepA subfamily.

It localises to the cell inner membrane. It catalyses the reaction GTP + H2O = GDP + phosphate + H(+). Functionally, required for accurate and efficient protein synthesis under certain stress conditions. May act as a fidelity factor of the translation reaction, by catalyzing a one-codon backward translocation of tRNAs on improperly translocated ribosomes. Back-translocation proceeds from a post-translocation (POST) complex to a pre-translocation (PRE) complex, thus giving elongation factor G a second chance to translocate the tRNAs correctly. Binds to ribosomes in a GTP-dependent manner. This chain is Elongation factor 4, found in Ehrlichia ruminantium (strain Gardel).